The chain runs to 516 residues: Levanbiose-producing levanase (516 aa).

Residues 1–5 (MNYIK) lie on the Cytoplasmic side of the membrane. Residues 6-26 (AGKWLTVFLTFLGILLFIDLF) form a helical membrane-spanning segment. The Extracellular segment spans residues 27–516 (PKEEHDQKTK…TVKHFDSIHE (490 aa)). Substrate contacts are provided by residues 55–58 (WKND), 116–117 (WT), 181–182 (RD), Glu230, and Trp318. Asp58 is a catalytic residue.

The protein belongs to the glycosyl hydrolase 32 family.

The protein localises to the cell membrane. It catalyses the reaction Hydrolysis of (2-&gt;6)-beta-D-fructofuranan, to remove successive disaccharide residues as levanbiose, i.e. 6-(beta-D-fructofuranosyl)-D-fructose, from the end of the chain.. Its function is as follows. Catalyzes the degradation of levan mainly into levanbiose (difructose). Is not active on sucrose. The chain is Levanbiose-producing levanase (levB) from Bacillus subtilis (strain 168).